The chain runs to 117 residues: Protein OPG035 (117 aa).

This sequence belongs to the poxviridae OPG035 family.

In terms of biological role, bcl-2-like protein which contributes to virulence by preventing host NF-kappa-B activation in response to pro-inflammatory stimuli such as TNF-alpha or IL1B. The polypeptide is Protein OPG035 (OPG035) (Monkeypox virus).